The sequence spans 595 residues: Protein UL31 (595 aa).

Residues methionine 1 to alanine 40 form the signal peptide. A disordered region spans residues threonine 47 to serine 94. Over residues threonine 68–glutamate 82 the composition is skewed to basic and acidic residues.

Belongs to the herpesviridae U10 family. In terms of assembly, interacts with host CGAS.

The protein resides in the host cytoplasm. It localises to the host nucleus. In terms of biological role, plays a role in the inhibition of host innate immune system by targeting host CGAS and promoting dissociation of DNA from CGAS, thereby inhibiting the enzymatic activity of CGAS. The sequence is that of Protein UL31 (UL31) from Human cytomegalovirus (strain Merlin) (HHV-5).